A 152-amino-acid chain; its full sequence is HMG-Y-related protein B (152 aa).

Residues 1 to 54 (ALNEADGSNKSAISKYIETTYGELPDETVLGSHLNKMKESGELAFKQNNYMKAD) form the H15 domain. The tract at residues 40–152 (SGELAFKQNN…PQLTEVSVES (113 aa)) is disordered. 4 consecutive DNA-binding regions (a.T hook) follow at residues 60–68 (KRGRGRPPK), 82–90 (PRPRGRPPK), 108–116 (GRPRGRPKK), and 132–140 (GRPRGRPPK).

The protein belongs to the HMGA family.

It is found in the nucleus. The chain is HMG-Y-related protein B from Glycine max (Soybean).